A 340-amino-acid polypeptide reads, in one-letter code: Phosphoribosylformylglycinamidine cyclo-ligase (340 aa).

It belongs to the AIR synthase family.

The protein localises to the cytoplasm. It catalyses the reaction 2-formamido-N(1)-(5-O-phospho-beta-D-ribosyl)acetamidine + ATP = 5-amino-1-(5-phospho-beta-D-ribosyl)imidazole + ADP + phosphate + H(+). It functions in the pathway purine metabolism; IMP biosynthesis via de novo pathway; 5-amino-1-(5-phospho-D-ribosyl)imidazole from N(2)-formyl-N(1)-(5-phospho-D-ribosyl)glycinamide: step 2/2. This Streptococcus pyogenes serotype M1 protein is Phosphoribosylformylglycinamidine cyclo-ligase.